A 1364-amino-acid polypeptide reads, in one-letter code: ABC-type transporter cns4 (1364 aa).

The ABC transporter 1 domain occupies 42–290 (SRVKESRAKP…MEEMGFLYTD (249 aa)). 2 N-linked (GlcNAc...) asparagine glycosylation sites follow: asparagine 152 and asparagine 214. A run of 5 helical transmembrane segments spans residues 435–455 (LFFA…GSFA), 483–503 (IPLI…MTGL), 508–528 (EAFL…TALF), 540–560 (AAIK…GFLI), and 567–587 (PWLG…AVLS). Residue asparagine 610 is glycosylated (N-linked (GlcNAc...) asparagine). Residues 650 to 670 (FAIVWVWWALFVILTVYFTSN) traverse the membrane as a helical segment. N-linked (GlcNAc...) asparagine glycosylation is found at asparagine 689, asparagine 711, and asparagine 739. Residues 697-732 (DEEVGSGPDSHDSRNRSGISPIGDKQETSTDGPSKI) form a disordered region. An ABC transporter 2 domain is found at 737-985 (IRNTSVFTWK…TVNEYFGRNG (249 aa)). 779 to 786 (GSSGAGKT) provides a ligand contact to ATP. The next 6 helical transmembrane spans lie at 1076–1094 (LMLH…WKIG), 1105–1125 (FTIF…QPLF), 1146–1166 (AFAT…AVVY), 1185–1205 (AVFF…QAIA), 1211–1231 (AIFA…FCGV), and 1245–1265 (WLYY…FTTF).

It belongs to the ABC transporter superfamily. ABCG family. PDR (TC 3.A.1.205) subfamily.

It is found in the cell membrane. Functionally, ABC-type transporter; part of the gene cluster that mediates the biosynthesis of cordycepin (COR) and pentostatin (PTN), two adenosine analogs with related bioactivity profiles as both mimic adenosine and can inhibit some of the processes that are adenosine dependent. Mediates the pumping of pentostatin but not of cordycepin out of fungal cells. Decreasing intracellular pentostatin releases adenosine deaminase (ADA) inhibition, allowing ADA to deaminate cordycepin into non-toxic 3'-d. In Cordyceps militaris (strain CM01) (Caterpillar fungus), this protein is ABC-type transporter cns4.